We begin with the raw amino-acid sequence, 132 residues long: Small ribosomal subunit protein uS8 (132 aa).

Belongs to the universal ribosomal protein uS8 family. Part of the 30S ribosomal subunit. Contacts proteins S5 and S12.

In terms of biological role, one of the primary rRNA binding proteins, it binds directly to 16S rRNA central domain where it helps coordinate assembly of the platform of the 30S subunit. The chain is Small ribosomal subunit protein uS8 from Psychrobacter arcticus (strain DSM 17307 / VKM B-2377 / 273-4).